Consider the following 252-residue polypeptide: Triosephosphate isomerase (252 aa).

9–11 is a binding site for substrate; it reads NWK. The active-site Electrophile is His95. Catalysis depends on Glu167, which acts as the Proton acceptor. Substrate is bound by residues Gly173, Ser213, and 234–235; that span reads GG. Ser213 is modified (phosphoserine).

The protein belongs to the triosephosphate isomerase family. In terms of assembly, homodimer.

It is found in the cytoplasm. The catalysed reaction is D-glyceraldehyde 3-phosphate = dihydroxyacetone phosphate. It functions in the pathway carbohydrate biosynthesis; gluconeogenesis. The protein operates within carbohydrate degradation; glycolysis; D-glyceraldehyde 3-phosphate from glycerone phosphate: step 1/1. Involved in the gluconeogenesis. Catalyzes stereospecifically the conversion of dihydroxyacetone phosphate (DHAP) to D-glyceraldehyde-3-phosphate (G3P). This chain is Triosephosphate isomerase, found in Oceanobacillus iheyensis (strain DSM 14371 / CIP 107618 / JCM 11309 / KCTC 3954 / HTE831).